The sequence spans 350 residues: Nuclear pore complex-interacting protein family member A3 (350 aa).

Positions 306–325 are disordered; that stretch reads KTPPECLLTPLPPSAPPSVD.

The protein belongs to the NPIP family.

The polypeptide is Nuclear pore complex-interacting protein family member A3 (NPIPA3) (Homo sapiens (Human)).